A 1154-amino-acid polypeptide reads, in one-letter code: ATP-dependent helicase/deoxyribonuclease subunit B (1154 aa).

In terms of domain architecture, UvrD-like helicase ATP-binding spans 1–284 (MSVRFIIGRS…EQLRHNVRHK (284 aa)). 8–15 (GRSGSGKT) serves as a coordination point for ATP. The region spanning 279-583 (HNVRHKHEEL…QFSLVPPATD (305 aa)) is the UvrD-like helicase C-terminal domain. The [4Fe-4S] cluster site is built by C799, C1120, C1123, and C1129.

This sequence belongs to the helicase family. AddB/RexB type 1 subfamily. In terms of assembly, heterodimer of AddA and AddB. It depends on Mg(2+) as a cofactor. The cofactor is [4Fe-4S] cluster.

In terms of biological role, the heterodimer acts as both an ATP-dependent DNA helicase and an ATP-dependent, dual-direction single-stranded exonuclease. Recognizes the chi site generating a DNA molecule suitable for the initiation of homologous recombination. The AddB subunit has 5' -&gt; 3' nuclease activity but not helicase activity. The chain is ATP-dependent helicase/deoxyribonuclease subunit B from Anoxybacillus flavithermus (strain DSM 21510 / WK1).